Consider the following 457-residue polypeptide: ATP synthase subunit beta (457 aa).

147-154 contacts ATP; the sequence is GGAGVGKT.

This sequence belongs to the ATPase alpha/beta chains family. In terms of assembly, F-type ATPases have 2 components, CF(1) - the catalytic core - and CF(0) - the membrane proton channel. CF(1) has five subunits: alpha(3), beta(3), gamma(1), delta(1), epsilon(1). CF(0) has three main subunits: a(1), b(2) and c(9-12). The alpha and beta chains form an alternating ring which encloses part of the gamma chain. CF(1) is attached to CF(0) by a central stalk formed by the gamma and epsilon chains, while a peripheral stalk is formed by the delta and b chains.

It localises to the cell inner membrane. It carries out the reaction ATP + H2O + 4 H(+)(in) = ADP + phosphate + 5 H(+)(out). Produces ATP from ADP in the presence of a proton gradient across the membrane. The catalytic sites are hosted primarily by the beta subunits. This is ATP synthase subunit beta from Histophilus somni (strain 2336) (Haemophilus somnus).